The sequence spans 705 residues: Polyribonucleotide nucleotidyltransferase (705 aa).

Mg(2+) is bound by residues D487 and D493. A KH domain is found at P554–I613. Residues G623–K691 form the S1 motif domain.

This sequence belongs to the polyribonucleotide nucleotidyltransferase family. It depends on Mg(2+) as a cofactor.

The protein resides in the cytoplasm. The enzyme catalyses RNA(n+1) + phosphate = RNA(n) + a ribonucleoside 5'-diphosphate. Its function is as follows. Involved in mRNA degradation. Catalyzes the phosphorolysis of single-stranded polyribonucleotides processively in the 3'- to 5'-direction. In Bacillus licheniformis (strain ATCC 14580 / DSM 13 / JCM 2505 / CCUG 7422 / NBRC 12200 / NCIMB 9375 / NCTC 10341 / NRRL NRS-1264 / Gibson 46), this protein is Polyribonucleotide nucleotidyltransferase.